The chain runs to 401 residues: Anhydro-N-acetylmuramic acid kinase (401 aa).

25–32 (GTSLDGLD) serves as a coordination point for ATP.

It belongs to the anhydro-N-acetylmuramic acid kinase family.

It carries out the reaction 1,6-anhydro-N-acetyl-beta-muramate + ATP + H2O = N-acetyl-D-muramate 6-phosphate + ADP + H(+). The protein operates within amino-sugar metabolism; 1,6-anhydro-N-acetylmuramate degradation. It participates in cell wall biogenesis; peptidoglycan recycling. Catalyzes the specific phosphorylation of 1,6-anhydro-N-acetylmuramic acid (anhMurNAc) with the simultaneous cleavage of the 1,6-anhydro ring, generating MurNAc-6-P. Is required for the utilization of anhMurNAc either imported from the medium or derived from its own cell wall murein, and thus plays a role in cell wall recycling. This is Anhydro-N-acetylmuramic acid kinase from Pseudoalteromonas translucida (strain TAC 125).